Reading from the N-terminus, the 583-residue chain is Nuclear distribution protein nudE homolog 1 (583 aa).

Positions 14-195 (ATLEDTLGWY…QDKFKKQESR (182 aa)) form a coiled coil. 3 disordered regions span residues 34–68 (LAEF…KAET), 211–339 (TFDG…TSNS), and 358–583 (HSVR…GETY). Basic and acidic residues predominate over residues 35 to 67 (AEFRDSSRELEQELEKDIERAEKQERHHQEKAE). Polar residues-rich tracts occupy residues 219 to 235 (PGST…TDSK), 279 to 319 (RSRL…TMRT), 329 to 339 (SASNKLPTSNS), 379 to 392 (NVYS…SITI), and 399 to 422 (SGSA…STPK). Residues 453-469 (RPSSRASTSYATSYARP) are compositionally biased toward low complexity. A compositionally biased stretch (polar residues) spans 529–538 (RRGTYSSQGG).

This sequence belongs to the nudE family. As to quaternary structure, self-associates. Interacts with PAC1.

The protein localises to the cytoplasm. The protein resides in the cytoskeleton. In terms of biological role, required for nuclear migration. The polypeptide is Nuclear distribution protein nudE homolog 1 (NDE1) (Gibberella zeae (strain ATCC MYA-4620 / CBS 123657 / FGSC 9075 / NRRL 31084 / PH-1) (Wheat head blight fungus)).